A 437-amino-acid polypeptide reads, in one-letter code: F-box protein At3g62430 (437 aa).

Residues 1–49 enclose the F-box domain; that stretch reads MDRISNLPDGVIYRVISLLSTKEATCLKYTSKNWLNLVTIIPIAVFVDS.

The sequence is that of F-box protein At3g62430 from Arabidopsis thaliana (Mouse-ear cress).